The primary structure comprises 258 residues: Hydroxyacylglutathione hydrolase (258 aa).

Zn(2+)-binding residues include His56, His58, Asp60, His61, His112, Asp132, and His170.

It belongs to the metallo-beta-lactamase superfamily. Glyoxalase II family. As to quaternary structure, monomer. Zn(2+) is required as a cofactor.

The enzyme catalyses an S-(2-hydroxyacyl)glutathione + H2O = a 2-hydroxy carboxylate + glutathione + H(+). The protein operates within secondary metabolite metabolism; methylglyoxal degradation; (R)-lactate from methylglyoxal: step 2/2. Its function is as follows. Thiolesterase that catalyzes the hydrolysis of S-D-lactoyl-glutathione to form glutathione and D-lactic acid. In Pseudomonas aeruginosa (strain ATCC 15692 / DSM 22644 / CIP 104116 / JCM 14847 / LMG 12228 / 1C / PRS 101 / PAO1), this protein is Hydroxyacylglutathione hydrolase.